The chain runs to 72 residues: Brevinin-2SN4 (72 aa).

The first 22 residues, 1–22 (MFTMKKPMLLLFFLGMISMSLC), serve as a signal peptide directing secretion. The propeptide at 23-40 (QDERGADEDDGGEMTEEE) is removed in mature form. Cys66 and Cys72 form a disulfide bridge.

Belongs to the frog skin active peptide (FSAP) family. Brevinin subfamily. Expressed by the skin glands.

It is found in the secreted. Its function is as follows. Antimicrobial peptide. Active against a variety of Gram-negative and Gram-positive bacterial strains. Not active against fungi. Shows very weak hemolytic activity against human erythrocytes. The chain is Brevinin-2SN4 from Sylvirana spinulosa (Fine-spined frog).